The sequence spans 342 residues: MDDGGHRENGRHKAAVQGQWLMQHQPSMKQVMSIIAERDAAIQERNLAISEKKAAVAERDMAFLQRDTAIAERNNAIMERDSALTALQYRENSMVTAPAANMSACPPGCQISRGVKHLHHPHMHHHHQQHHIPQLTENAYETREMEPNDGLPTSPPAGSTLESAKPKRGKRVNPKATTQTAANKRGPKNQRKVKKESEDDLNKIMFVKTTHDYTDEDSSKHILIGSKSDWKSQEMVGLNQVVYDETTMPPPVCSCTGVLRQCYKWGNGGWQSSCCTTTLSMYPLPALPNKRHARVGGRKMSGSAFNKLLSRLAAEGHHDLSNPVDLKDHWAKHGTNRYITIK.

A coiled-coil region spans residues 41-67 (AIQERNLAISEKKAAVAERDMAFLQRD). Positions 41-76 (AIQERNLAISEKKAAVAERDMAFLQRDTAIAERNNA) are alanine-zipper. Residues 143–199 (REMEPNDGLPTSPPAGSTLESAKPKRGKRVNPKATTQTAANKRGPKNQRKVKKESED) form a disordered region. The segment at 164–195 (AKPKRGKRVNPKATTQTAANKRGPKNQRKVKK) is required for nucleus and nucleolus localization. The span at 185 to 194 (RGPKNQRKVK) shows a compositional bias: basic residues. A Nuclear localization signal motif is present at residues 192–195 (KVKK).

Belongs to the BBR/BPC family. As to quaternary structure, homodimer. Heterodimer with BPC4. Expressed in seedlings, leaves and pistils. Detected in the base of flowers and tips of carpels, in sepal vasculature, in young rosette, in the lateral and tip of primary roots, and in ovule at the exception of the outer integument.

It is found in the nucleus. The protein resides in the nucleolus. Functionally, transcriptional regulator that specifically binds to GA-rich elements (GAGA-repeats) present in regulatory sequences of genes involved in developmental processes. The chain is Protein BASIC PENTACYSTEINE6 (BPC6) from Arabidopsis thaliana (Mouse-ear cress).